We begin with the raw amino-acid sequence, 274 residues long: 4-diphosphocytidyl-2-C-methyl-D-erythritol kinase (274 aa).

Residue lysine 8 is part of the active site. 94 to 104 (PSGAGLGGGSA) provides a ligand contact to ATP. Aspartate 136 is an active-site residue.

The protein belongs to the GHMP kinase family. IspE subfamily.

It carries out the reaction 4-CDP-2-C-methyl-D-erythritol + ATP = 4-CDP-2-C-methyl-D-erythritol 2-phosphate + ADP + H(+). Its pathway is isoprenoid biosynthesis; isopentenyl diphosphate biosynthesis via DXP pathway; isopentenyl diphosphate from 1-deoxy-D-xylulose 5-phosphate: step 3/6. In terms of biological role, catalyzes the phosphorylation of the position 2 hydroxy group of 4-diphosphocytidyl-2C-methyl-D-erythritol. In Bacteroides fragilis (strain YCH46), this protein is 4-diphosphocytidyl-2-C-methyl-D-erythritol kinase.